Reading from the N-terminus, the 146-residue chain is Hemoglobin subunit beta-S/F (146 aa).

V1 carries the post-translational modification N-acetylvaline. Residues 2 to 146 (HLTDGEKNAI…VANALSHKYH (145 aa)) enclose the Globin domain. The residue at position 44 (S44) is a Phosphoserine. Residue K59 is modified to N6-acetyllysine. Position 63 (H63) interacts with heme b. The residue at position 82 (K82) is an N6-acetyllysine. A heme b-binding site is contributed by H92. C93 bears the S-nitrosocysteine mark. Position 144 is an N6-acetyllysine (K144).

It belongs to the globin family. Heterotetramer of two alpha chains and two beta chains. In terms of tissue distribution, red blood cells.

In terms of biological role, involved in oxygen transport from the lung to the various peripheral tissues. The chain is Hemoglobin subunit beta-S/F from Urocitellus townsendii (Townsend's ground squirrel).